We begin with the raw amino-acid sequence, 665 residues long: PR5-like receptor kinase (665 aa).

An N-terminal signal peptide occupies residues 1–24 (MVEGFSLSLMFLLVSHFFVSGVMS). Topologically, residues 25 to 276 (RNFTIENKCD…TKQKSSWKLK (252 aa)) are extracellular. 2 N-linked (GlcNAc...) asparagine glycosylation sites follow: Asn26 and Asn88. 8 disulfide bridges follow: Cys33–Cys249, Cys81–Cys91, Cys96–Cys103, Cys153–Cys238, Cys158–Cys221, Cys166–Cys184, Cys188–Cys197, and Cys198–Cys208. Asn163 carries N-linked (GlcNAc...) asparagine glycosylation. Asn233 is a glycosylation site (N-linked (GlcNAc...) asparagine). Residues 277–297 (LIVGVSAALTLMILIVVVIIV) form a helical membrane-spanning segment. The Cytoplasmic segment spans residues 298–665 (RTKNMRNSEW…DVLQHGSRSS (368 aa)). Residues 331-620 (NSFAHVLGKG…ALQVPPNPLL (290 aa)) form the Protein kinase domain. ATP contacts are provided by residues 337-345 (LGKGGFGTV) and Lys360. The active-site Proton acceptor is the Asp455.

The protein in the N-terminal section; belongs to the thaumatin family. It in the C-terminal section; belongs to the protein kinase superfamily. Ser/Thr protein kinase family. Autophosphorylated in vitro. In terms of tissue distribution, expressed in roots. Expressed at low levels in stems.

It is found in the membrane. It carries out the reaction L-seryl-[protein] + ATP = O-phospho-L-seryl-[protein] + ADP + H(+). It catalyses the reaction L-threonyl-[protein] + ATP = O-phospho-L-threonyl-[protein] + ADP + H(+). In terms of biological role, possesses kinase activity in vitro. The sequence is that of PR5-like receptor kinase from Arabidopsis thaliana (Mouse-ear cress).